The chain runs to 141 residues: MLMPKRVKYRREHRGRMKGRAKGGTEVHFGEFGLQALESAWITNRQIEAARRAMTRYMKRGGKVWIRIFPSKPYTAKPLEVRMGSGKGAPEGWVAVVKPGKVMFEVAGVSEEVAREALRLASHKLPIKCKFVKREETGGEA.

This sequence belongs to the universal ribosomal protein uL16 family. Part of the 50S ribosomal subunit.

In terms of biological role, binds 23S rRNA and is also seen to make contacts with the A and possibly P site tRNAs. The chain is Large ribosomal subunit protein uL16 from Geobacillus thermodenitrificans (strain NG80-2).